A 196-amino-acid polypeptide reads, in one-letter code: Imidazoleglycerol-phosphate dehydratase (196 aa).

This sequence belongs to the imidazoleglycerol-phosphate dehydratase family.

The protein resides in the cytoplasm. The catalysed reaction is D-erythro-1-(imidazol-4-yl)glycerol 3-phosphate = 3-(imidazol-4-yl)-2-oxopropyl phosphate + H2O. The protein operates within amino-acid biosynthesis; L-histidine biosynthesis; L-histidine from 5-phospho-alpha-D-ribose 1-diphosphate: step 6/9. This chain is Imidazoleglycerol-phosphate dehydratase, found in Zymomonas mobilis subsp. mobilis (strain ATCC 31821 / ZM4 / CP4).